The sequence spans 104 residues: Integration host factor subunit alpha (104 aa).

The interval 51 to 70 is disordered; the sequence is GNFQLRDKPQRPGRNPKTGE.

The protein belongs to the bacterial histone-like protein family. In terms of assembly, heterodimer of an alpha and a beta chain.

This protein is one of the two subunits of integration host factor, a specific DNA-binding protein that functions in genetic recombination as well as in transcriptional and translational control. In Ralstonia nicotianae (strain ATCC BAA-1114 / GMI1000) (Ralstonia solanacearum), this protein is Integration host factor subunit alpha.